Reading from the N-terminus, the 415-residue chain is uncharacterized protein (415 aa).

[4Fe-4S] cluster contacts are provided by C66, C72, C75, and C149. Q249, F276, E296, and D344 together coordinate S-adenosyl-L-methionine. The active-site Nucleophile is the C370.

The protein belongs to the class I-like SAM-binding methyltransferase superfamily. RNA M5U methyltransferase family.

This is an uncharacterized protein from Brucella melitensis biotype 1 (strain ATCC 23456 / CCUG 17765 / NCTC 10094 / 16M).